The primary structure comprises 317 residues: Glucokinase (317 aa).

ATP is bound at residue 6 to 12; that stretch reads GVDIGGT.

Belongs to the ROK (NagC/XylR) family. In terms of assembly, homooligomer (possibly a homotetramer). Alternatively, it may form a heterotetramer of two glucokinase subunits with two ORF2 (AC P40182) proteins.

It localises to the cytoplasm. The enzyme catalyses D-glucose + ATP = D-glucose 6-phosphate + ADP + H(+). Functionally, a probable glucose kinase. Required for glucose repression of many different genes, restores glucose kinase activity in E.coli glk mutants. The chain is Glucokinase (glkA) from Streptomyces coelicolor (strain ATCC BAA-471 / A3(2) / M145).